A 201-amino-acid chain; its full sequence is Large ribosomal subunit protein uL4 (201 aa).

The interval 44–68 is disordered; sequence RAQKSRAEVSGSGRKPWRQKGTGRA.

The protein belongs to the universal ribosomal protein uL4 family. Part of the 50S ribosomal subunit.

In terms of biological role, one of the primary rRNA binding proteins, this protein initially binds near the 5'-end of the 23S rRNA. It is important during the early stages of 50S assembly. It makes multiple contacts with different domains of the 23S rRNA in the assembled 50S subunit and ribosome. Its function is as follows. Forms part of the polypeptide exit tunnel. The sequence is that of Large ribosomal subunit protein uL4 from Buchnera aphidicola subsp. Acyrthosiphon pisum (strain APS) (Acyrthosiphon pisum symbiotic bacterium).